A 420-amino-acid chain; its full sequence is 5'-deoxyadenosine deaminase (420 aa).

Residues histidine 55 and histidine 57 each contribute to the Zn(2+) site. Substrate is bound by residues glutamate 84 and histidine 176. Histidine 203 serves as a coordination point for Zn(2+). Glutamate 206 and aspartate 292 together coordinate substrate. Aspartate 292 provides a ligand contact to Zn(2+).

The protein belongs to the metallo-dependent hydrolases superfamily. MTA/SAH deaminase family. As to quaternary structure, homotetramer. It depends on Zn(2+) as a cofactor.

It catalyses the reaction 5'-deoxyadenosine + H2O + H(+) = 5'-deoxyinosine + NH4(+). The enzyme catalyses S-adenosyl-L-homocysteine + H2O + H(+) = S-inosyl-L-homocysteine + NH4(+). It carries out the reaction S-methyl-5'-thioadenosine + H2O + H(+) = S-methyl-5'-thioinosine + NH4(+). The catalysed reaction is adenosine + H2O + H(+) = inosine + NH4(+). Its pathway is amino-acid biosynthesis; S-adenosyl-L-methionine biosynthesis. Catalyzes the deamination of three SAM-derived enzymatic products, namely 5'-deoxyadenosine, S-adenosyl-L-homocysteine, and 5'-methylthioadenosine, to produce the inosine analogs. Can also deaminate adenosine. The preferred substrate for this enzyme is 5'-deoxyadenosine, but all these substrates are efficiently deaminated. Likely functions in a S-adenosyl-L-methionine (SAM) recycling pathway from S-adenosyl-L-homocysteine (SAH) produced from SAM-dependent methylation reactions. May also be involved in the recycling of 5'-deoxyadenosine, whereupon the 5'-deoxyribose moiety of 5'-deoxyinosine is further metabolized to deoxyhexoses used for the biosynthesis of aromatic amino acids in methanogens. The polypeptide is 5'-deoxyadenosine deaminase (Methanocaldococcus jannaschii (strain ATCC 43067 / DSM 2661 / JAL-1 / JCM 10045 / NBRC 100440) (Methanococcus jannaschii)).